The sequence spans 329 residues: Phenylalanine--tRNA ligase alpha subunit (329 aa).

Glutamate 253 serves as a coordination point for Mg(2+).

It belongs to the class-II aminoacyl-tRNA synthetase family. Phe-tRNA synthetase alpha subunit type 1 subfamily. In terms of assembly, tetramer of two alpha and two beta subunits. Mg(2+) is required as a cofactor.

The protein resides in the cytoplasm. It carries out the reaction tRNA(Phe) + L-phenylalanine + ATP = L-phenylalanyl-tRNA(Phe) + AMP + diphosphate + H(+). The protein is Phenylalanine--tRNA ligase alpha subunit of Teredinibacter turnerae (strain ATCC 39867 / T7901).